The chain runs to 683 residues: Acetyl-coenzyme A synthetase 2 (683 aa).

Residues 206 to 209 and threonine 325 contribute to the CoA site; that span reads RGGK. ATP is bound by residues 401–403 and 425–430; these read GEP and DTMWQT. Position 425–430 (425–430) interacts with AMP; sequence DTMWQT. Lysine 506 is covalently cross-linked (Glycyl lysine isopeptide (Lys-Gly) (interchain with G-Cter in ubiquitin)). 2 residues coordinate ATP: aspartate 516 and arginine 531. 2 residues coordinate AMP: aspartate 516 and arginine 531. Position 539 (serine 539) interacts with CoA. An ATP-binding site is contributed by arginine 542. Arginine 612 lines the CoA pocket. Residue serine 679 is modified to Phosphoserine.

It belongs to the ATP-dependent AMP-binding enzyme family.

It is found in the cytoplasm. It localises to the nucleus. It catalyses the reaction acetate + ATP + CoA = acetyl-CoA + AMP + diphosphate. It participates in carbohydrate metabolism; pyruvate metabolism. Catalyzes the production of acetyl-CoA. Provides the acetyl-CoA source for histone acetylation in the nucleus. 'Anaerobic' isozyme of acetyl-coenzyme A synthetase, which is required for growth on fermentable carbon sources such as glucose. May be involved in the PDH (pyruvate dehydrogenase complex) bypass. This chain is Acetyl-coenzyme A synthetase 2, found in Saccharomyces cerevisiae (strain ATCC 204508 / S288c) (Baker's yeast).